The sequence spans 125 residues: Lymphocyte antigen 6 complex locus protein G6c (125 aa).

Positions 1–18 (MRALLLLSLSALLCWVSA) are cleaved as a signal peptide. One can recognise a UPAR/Ly6 domain in the interval 20–111 (IRCHSCYKLP…PRPTPALTLV (92 aa)). 3 disulfides stabilise this stretch: C22-C47, C25-C33, and C39-C65. N88 is a glycosylation site (N-linked (GlcNAc...) asparagine). Cysteines 92 and 97 form a disulfide. A lipid anchor (GPI-anchor amidated serine) is attached at S99. Positions 100–125 (PAPRPTPALTLVFLTSLAGLGLWLLH) are cleaved as a propeptide — removed in mature form.

N-glycosylated.

The protein resides in the cell membrane. The polypeptide is Lymphocyte antigen 6 complex locus protein G6c (LY6G6C) (Bos taurus (Bovine)).